Consider the following 360-residue polypeptide: Geranylgeranyl pyrophosphate synthase 12, chloroplastic (360 aa).

The transit peptide at 1–39 (MANTVHLSSSSLFIQTRGRKYNSILSFNNLQKRTVLSLS) directs the protein to the chloroplast. Isopentenyl diphosphate-binding residues include lysine 106, arginine 109, and histidine 138. Mg(2+) contacts are provided by aspartate 145 and aspartate 151. Position 156 (arginine 156) interacts with dimethylallyl diphosphate. Position 157 (arginine 157) interacts with isopentenyl diphosphate. 5 residues coordinate dimethylallyl diphosphate: lysine 245, threonine 246, glutamine 283, lysine 300, and lysine 310.

The protein belongs to the FPP/GGPP synthase family. In terms of assembly, monomer. Mg(2+) is required as a cofactor.

The protein resides in the plastid. Its subcellular location is the chloroplast. It carries out the reaction isopentenyl diphosphate + dimethylallyl diphosphate = (2E)-geranyl diphosphate + diphosphate. It catalyses the reaction isopentenyl diphosphate + (2E)-geranyl diphosphate = (2E,6E)-farnesyl diphosphate + diphosphate. The catalysed reaction is isopentenyl diphosphate + (2E,6E)-farnesyl diphosphate = (2E,6E,10E)-geranylgeranyl diphosphate + diphosphate. The protein operates within isoprenoid biosynthesis; farnesyl diphosphate biosynthesis; farnesyl diphosphate from geranyl diphosphate and isopentenyl diphosphate: step 1/1. Its pathway is isoprenoid biosynthesis; geranyl diphosphate biosynthesis; geranyl diphosphate from dimethylallyl diphosphate and isopentenyl diphosphate: step 1/1. It participates in isoprenoid biosynthesis; geranylgeranyl diphosphate biosynthesis; geranylgeranyl diphosphate from farnesyl diphosphate and isopentenyl diphosphate: step 1/1. Functionally, catalyzes the trans-addition of the three molecules of IPP onto DMAPP to form geranylgeranyl pyrophosphate. The protein is Geranylgeranyl pyrophosphate synthase 12, chloroplastic of Arabidopsis thaliana (Mouse-ear cress).